Reading from the N-terminus, the 241-residue chain is Cytochrome b6-f complex iron-sulfur subunit 2, cyanelle (241 aa).

The N-terminal 62 residues, Met-1–Ser-62, are a transit peptide targeting the cyanelle. Residues Leu-83 to Val-103 traverse the membrane as a helical segment. A Rieske domain is found at Val-127 to Ala-223. Residues Cys-169, His-171, Cys-187, and His-190 each coordinate [2Fe-2S] cluster. Cysteines 174 and 189 form a disulfide.

The protein belongs to the Rieske iron-sulfur protein family. In terms of assembly, the 4 large subunits of the cytochrome b6-f complex are cytochrome b6, subunit IV (17 kDa polypeptide, petD), cytochrome f and the Rieske protein, while the 4 small subunits are petG, petL, petM and petN. The complex functions as a dimer. The cofactor is [2Fe-2S] cluster.

The protein localises to the plastid. Its subcellular location is the cyanelle thylakoid membrane. The enzyme catalyses 2 oxidized [plastocyanin] + a plastoquinol + 2 H(+)(in) = 2 reduced [plastocyanin] + a plastoquinone + 4 H(+)(out). Its function is as follows. Component of the cytochrome b6-f complex, which mediates electron transfer between photosystem II (PSII) and photosystem I (PSI), cyclic electron flow around PSI, and state transitions. The protein is Cytochrome b6-f complex iron-sulfur subunit 2, cyanelle (petC-2) of Cyanophora paradoxa.